A 1399-amino-acid chain; its full sequence is DNA-directed RNA polymerase subunit beta' (1399 aa).

Residues cysteine 70, cysteine 72, cysteine 85, and cysteine 88 each contribute to the Zn(2+) site. Residues aspartate 460, aspartate 462, and aspartate 464 each contribute to the Mg(2+) site. Residues cysteine 814, cysteine 888, cysteine 895, and cysteine 898 each contribute to the Zn(2+) site.

This sequence belongs to the RNA polymerase beta' chain family. The RNAP catalytic core consists of 2 alpha, 1 beta, 1 beta' and 1 omega subunit. When a sigma factor is associated with the core the holoenzyme is formed, which can initiate transcription. Mg(2+) is required as a cofactor. The cofactor is Zn(2+).

It carries out the reaction RNA(n) + a ribonucleoside 5'-triphosphate = RNA(n+1) + diphosphate. DNA-dependent RNA polymerase catalyzes the transcription of DNA into RNA using the four ribonucleoside triphosphates as substrates. In Pseudomonas putida (strain W619), this protein is DNA-directed RNA polymerase subunit beta'.